A 98-amino-acid chain; its full sequence is Large ribosomal subunit protein uL23 (98 aa).

Belongs to the universal ribosomal protein uL23 family. Part of the 50S ribosomal subunit. Contacts protein L29, and trigger factor when it is bound to the ribosome.

In terms of biological role, one of the early assembly proteins it binds 23S rRNA. One of the proteins that surrounds the polypeptide exit tunnel on the outside of the ribosome. Forms the main docking site for trigger factor binding to the ribosome. The chain is Large ribosomal subunit protein uL23 from Bifidobacterium animalis subsp. lactis (strain AD011).